A 762-amino-acid polypeptide reads, in one-letter code: Multifunctional tryptophan biosynthesis protein (762 aa).

The Glutamine amidotransferase type-1 domain maps to 25–224; the sequence is NLILIDNYDS…LHMQGGTWAE (200 aa). Position 76 to 78 (76 to 78) interacts with L-glutamine; the sequence is GPG. Catalysis depends on cysteine 104, which acts as the Nucleophile; for GATase activity. L-glutamine is bound by residues glutamine 108 and 154-155; that span reads SL. Active-site for GATase activity residues include histidine 198 and glutamate 200. The segment at 251–515 is indole-3-glycerol phosphate synthase; it reads ILQKIYAHRK…DATQFIRELC (265 aa). The tract at residues 531–762 is N-(5'-phosphoribosyl)anthranilate isomerase; it reads LVKICGTRSA…EFVKAAKSVR (232 aa).

As to quaternary structure, tetramer of two components I and two components II.

The catalysed reaction is chorismate + L-glutamine = anthranilate + pyruvate + L-glutamate + H(+). It catalyses the reaction N-(5-phospho-beta-D-ribosyl)anthranilate = 1-(2-carboxyphenylamino)-1-deoxy-D-ribulose 5-phosphate. It carries out the reaction 1-(2-carboxyphenylamino)-1-deoxy-D-ribulose 5-phosphate + H(+) = (1S,2R)-1-C-(indol-3-yl)glycerol 3-phosphate + CO2 + H2O. It functions in the pathway amino-acid biosynthesis; L-tryptophan biosynthesis; L-tryptophan from chorismate: step 1/5. Its pathway is amino-acid biosynthesis; L-tryptophan biosynthesis; L-tryptophan from chorismate: step 3/5. It participates in amino-acid biosynthesis; L-tryptophan biosynthesis; L-tryptophan from chorismate: step 4/5. Functionally, trifunctional enzyme bearing the Gln amidotransferase (GATase) domain of anthranilate synthase, indole-glycerolphosphate synthase, and phosphoribosylanthranilate isomerase activities. This chain is Multifunctional tryptophan biosynthesis protein (trp-1), found in Neurospora crassa (strain ATCC 24698 / 74-OR23-1A / CBS 708.71 / DSM 1257 / FGSC 987).